We begin with the raw amino-acid sequence, 394 residues long: NAD(P)H-quinone oxidoreductase subunit H (394 aa).

The protein belongs to the complex I 49 kDa subunit family. As to quaternary structure, NDH-1 can be composed of about 15 different subunits; different subcomplexes with different compositions have been identified which probably have different functions.

It is found in the cellular thylakoid membrane. The enzyme catalyses a plastoquinone + NADH + (n+1) H(+)(in) = a plastoquinol + NAD(+) + n H(+)(out). It carries out the reaction a plastoquinone + NADPH + (n+1) H(+)(in) = a plastoquinol + NADP(+) + n H(+)(out). NDH-1 shuttles electrons from an unknown electron donor, via FMN and iron-sulfur (Fe-S) centers, to quinones in the respiratory and/or the photosynthetic chain. The immediate electron acceptor for the enzyme in this species is believed to be plastoquinone. Couples the redox reaction to proton translocation, and thus conserves the redox energy in a proton gradient. Cyanobacterial NDH-1 also plays a role in inorganic carbon-concentration. This is NAD(P)H-quinone oxidoreductase subunit H from Synechococcus sp. (strain CC9605).